The sequence spans 326 residues: Flotillin-like protein FloA (326 aa).

Transmembrane regions (helical) follow at residues 6–26 (IILFFLVVAVIVLFYFVGSSV) and 27–47 (SLWIQALVSGARVGLLNIVFM).

It belongs to the flotillin-like FloA family. As to quaternary structure, homooligomerizes.

Its subcellular location is the cell membrane. It localises to the membrane raft. Its function is as follows. Found in functional membrane microdomains (FMM) that may be equivalent to eukaryotic membrane rafts. FMMs are highly dynamic and increase in number as cells age. Flotillins are thought to be important factors in membrane fluidity. This chain is Flotillin-like protein FloA, found in Desulfosudis oleivorans (strain DSM 6200 / JCM 39069 / Hxd3) (Desulfococcus oleovorans).